The following is a 478-amino-acid chain: Putative UDP-glucose flavonoid 3-O-glucosyltransferase 3 (478 aa).

The protein belongs to the UDP-glycosyltransferase family.

The sequence is that of Putative UDP-glucose flavonoid 3-O-glucosyltransferase 3 from Fragaria ananassa (Strawberry).